Here is a 196-residue protein sequence, read N- to C-terminus: UPF0056 membrane protein BU449 (196 aa).

Transmembrane regions (helical) follow at residues 8–28 (TILL…MTIL), 45–65 (IIAL…LIIL), 71–91 (TVSI…IFPS), 105–125 (FLVP…TLML), 134–154 (MFYL…ILLS), and 174–194 (MGLV…RAWF).

Belongs to the UPF0056 (MarC) family.

The protein localises to the cell membrane. This chain is UPF0056 membrane protein BU449, found in Buchnera aphidicola subsp. Acyrthosiphon pisum (strain APS) (Acyrthosiphon pisum symbiotic bacterium).